Reading from the N-terminus, the 439-residue chain is Trehalose-phosphatase (439 aa).

Mg(2+) is bound by residues Asp163 and Asp165. Asp165 serves as the catalytic Proton donor/acceptor. Residue 282 to 284 participates in substrate binding; that stretch reads QRK. Asp373 serves as a coordination point for Mg(2+).

Belongs to the gob-1 trehalose phosphatase family. Mg(2+) is required as a cofactor. Ubiquitously expressed. Strong expression in intestine.

It catalyses the reaction alpha,alpha-trehalose 6-phosphate + H2O = alpha,alpha-trehalose + phosphate. In terms of biological role, catalyzes the hydrolysis of trehalose 6-phosphate to trehalose and phosphate; prevents the accumulation of toxic levels of trehalose 6-phosphate. The protein is Trehalose-phosphatase of Caenorhabditis elegans.